The primary structure comprises 358 residues: Prostaglandin E2 receptor EP2 subtype (358 aa).

Over 1-23 the chain is Extracellular; it reads MGNASNDSQSEDCETRQWLPPGE. 2 N-linked (GlcNAc...) asparagine glycosylation sites follow: Asn3 and Asn6. The chain crosses the membrane as a helical span at residues 24 to 47; that stretch reads SPAISSVMFSAGVLGNLIALALLA. Over 48 to 65 the chain is Cytoplasmic; sequence RRWRGDVGCSAGRRSSLS. A helical transmembrane segment spans residues 66-91; it reads LFHVLVTELVFTDLLGTCLISPVVLA. Residues 92–111 are Extracellular-facing; the sequence is SYARNQTLVALAPESRACTY. Asn96 is a glycosylation site (N-linked (GlcNAc...) asparagine). A disulfide bridge links Cys109 with Cys187. Residues 112 to 132 form a helical membrane-spanning segment; the sequence is FAFAMTFFSLATMLMLFAMAL. Topologically, residues 133–151 are cytoplasmic; sequence ERYLSIGHPYFYQRRVSRS. A helical transmembrane segment spans residues 152–176; that stretch reads GGLAVLPVIYAVSLLFCSLPLLDYG. The Extracellular segment spans residues 177–198; it reads QYVQYCPGTWCFIRHGRTAYLQ. Residues 199-223 form a helical membrane-spanning segment; sequence LYATLLLLLIVSVLACNFSVILNLI. The Cytoplasmic portion of the chain corresponds to 224–262; sequence RMHRRSRRSRCGPSLGSGRGGPGARRRGERVSMAEETDH. Residues 231–253 are disordered; that stretch reads RSRCGPSLGSGRGGPGARRRGER. Residues 263-286 form a helical membrane-spanning segment; it reads LILLAIMTITFAVCSLPFTIFAYM. Residue Asn287 is glycosylated (N-linked (GlcNAc...) asparagine). Residues 287–299 are Extracellular-facing; sequence NETSSRKEKWDLQ. The helical transmembrane segment at 300–323 threads the bilayer; it reads ALRFLSINSIIDPWVFAILRPPVL. At 324–358 the chain is on the cytoplasmic side; sequence RLMRSVLCCRISLRTQDATQTSCSTQSDASKQADL.

It belongs to the G-protein coupled receptor 1 family. In terms of tissue distribution, placenta and lung.

Its subcellular location is the cell membrane. Receptor for prostaglandin E2 (PGE2). The activity of this receptor is mediated by G(s) proteins that stimulate adenylate cyclase. The subsequent raise in intracellular cAMP is responsible for the relaxing effect of this receptor on smooth muscle. The polypeptide is Prostaglandin E2 receptor EP2 subtype (PTGER2) (Homo sapiens (Human)).